Consider the following 71-residue polypeptide: Large ribosomal subunit protein bL31 (71 aa).

4 residues coordinate Zn(2+): cysteine 16, cysteine 18, cysteine 37, and cysteine 40.

The protein belongs to the bacterial ribosomal protein bL31 family. Type A subfamily. In terms of assembly, part of the 50S ribosomal subunit. It depends on Zn(2+) as a cofactor.

Functionally, binds the 23S rRNA. This Nitratidesulfovibrio vulgaris (strain ATCC 29579 / DSM 644 / CCUG 34227 / NCIMB 8303 / VKM B-1760 / Hildenborough) (Desulfovibrio vulgaris) protein is Large ribosomal subunit protein bL31.